The following is a 92-amino-acid chain: Probable K(+)/H(+) antiporter subunit F (92 aa).

Helical transmembrane passes span 4–24 (AVVW…AFAL), 36–56 (RILG…TFGI), and 62–82 (VYFE…IALA).

The protein belongs to the CPA3 antiporters (TC 2.A.63) subunit F family. As to quaternary structure, may form a hetero-oligomeric complex that consists of six subunits: PhaAB, PhaC, PhaD, PhaE, PhaF and PhaG.

Its subcellular location is the cell membrane. Part of a K(+) efflux system which is required for the adaptation of R.meliloti to alkaline pH as well as for the infection process during symbiotic nodule development. This chain is Probable K(+)/H(+) antiporter subunit F (phaF), found in Rhizobium meliloti (strain 1021) (Ensifer meliloti).